A 155-amino-acid polypeptide reads, in one-letter code: 6,7-dimethyl-8-ribityllumazine synthase (155 aa).

5-amino-6-(D-ribitylamino)uracil is bound by residues phenylalanine 23, 57 to 59 (AFE), and 81 to 83 (AVI). Residue 86–87 (ST) coordinates (2S)-2-hydroxy-3-oxobutyl phosphate. The active-site Proton donor is histidine 89. A 5-amino-6-(D-ribitylamino)uracil-binding site is contributed by phenylalanine 114. Arginine 128 is a binding site for (2S)-2-hydroxy-3-oxobutyl phosphate.

Belongs to the DMRL synthase family.

It catalyses the reaction (2S)-2-hydroxy-3-oxobutyl phosphate + 5-amino-6-(D-ribitylamino)uracil = 6,7-dimethyl-8-(1-D-ribityl)lumazine + phosphate + 2 H2O + H(+). Its pathway is cofactor biosynthesis; riboflavin biosynthesis; riboflavin from 2-hydroxy-3-oxobutyl phosphate and 5-amino-6-(D-ribitylamino)uracil: step 1/2. Its function is as follows. Catalyzes the formation of 6,7-dimethyl-8-ribityllumazine by condensation of 5-amino-6-(D-ribitylamino)uracil with 3,4-dihydroxy-2-butanone 4-phosphate. This is the penultimate step in the biosynthesis of riboflavin. This is 6,7-dimethyl-8-ribityllumazine synthase from Pelobacter propionicus (strain DSM 2379 / NBRC 103807 / OttBd1).